The primary structure comprises 669 residues: DNA ligase (669 aa).

NAD(+) contacts are provided by residues 33–37, 82–83, and glutamate 115; these read DLTYD and SL. The active-site N6-AMP-lysine intermediate is the lysine 117. The NAD(+) site is built by arginine 138, glutamate 172, lysine 286, and lysine 310. Zn(2+) is bound by residues cysteine 401, cysteine 404, cysteine 417, and cysteine 422.

Belongs to the NAD-dependent DNA ligase family. LigA subfamily. Mg(2+) is required as a cofactor. It depends on Mn(2+) as a cofactor.

It carries out the reaction NAD(+) + (deoxyribonucleotide)n-3'-hydroxyl + 5'-phospho-(deoxyribonucleotide)m = (deoxyribonucleotide)n+m + AMP + beta-nicotinamide D-nucleotide.. In terms of biological role, DNA ligase that catalyzes the formation of phosphodiester linkages between 5'-phosphoryl and 3'-hydroxyl groups in double-stranded DNA using NAD as a coenzyme and as the energy source for the reaction. It is essential for DNA replication and repair of damaged DNA. This is DNA ligase from Borrelia hermsii (strain HS1 / DAH).